Reading from the N-terminus, the 511-residue chain is DEP domain-containing protein 7 (511 aa).

A DEP domain is found at 46 to 136 (LQTQVEVKKR…SSCSLYRFTT (91 aa)).

The protein belongs to the DEPDC7 family.

This is DEP domain-containing protein 7 (DEPDC7) from Pongo abelii (Sumatran orangutan).